Reading from the N-terminus, the 127-residue chain is Translation initiation factor 5A (127 aa).

K35 carries the post-translational modification Hypusine.

Belongs to the eIF-5A family.

It localises to the cytoplasm. Functions by promoting the formation of the first peptide bond. The protein is Translation initiation factor 5A of Methanococcoides burtonii (strain DSM 6242 / NBRC 107633 / OCM 468 / ACE-M).